A 216-amino-acid polypeptide reads, in one-letter code: Protein ORM2 (216 aa).

The disordered stretch occupies residues 1-50 (MIDRTKNESPAFEESPLTPNVSNLKPFPSQSNKISTPVTDHRRRRSSSVI). Residues 1–78 (MIDRTKNESP…NMNATWVDQR (78 aa)) are Cytoplasmic-facing. 2 positions are modified to phosphoserine: Ser9 and Ser15. Positions 17–38 (LTPNVSNLKPFPSQSNKISTPV) are enriched in polar residues. Position 18 is a phosphothreonine (Thr18). A phosphoserine mark is found at Ser22, Ser29, and Ser51. A helical transmembrane segment spans residues 79–99 (GAWLIHIVVIVLLRLFYSLFG). Residues 100–103 (STPK) are Extracellular-facing. The chain crosses the membrane as a helical span at residues 104–124 (WTWTLTNMTYIIGFYIMFHLV). Topologically, residues 125–148 (KGTPFDFNGGAYDNLTMWEQINDE) are cytoplasmic. Residues 149-169 (TLYTPTRKFLLIVPIVLFLIS) form a helical membrane-spanning segment. Residues 170–177 (NQYYRNDM) lie on the Extracellular side of the membrane. The chain crosses the membrane as a helical span at residues 178–198 (TLFLSNLAVTVLIGVVPKLGI). Residues 199–216 (THRLRISIPGITGRAQIS) lie on the Cytoplasmic side of the membrane.

It belongs to the ORM family. As to quaternary structure, component of the SPOTS complex, at least composed of LCB1/2 (LCB1 and/or LCB2), ORM1/2 (ORM1 and/or ORM2), SAC1 and TSC3. In terms of processing, phosphorylated in case of disruption of sphingolipid synthesis. Phosphorylation regulates the inhibitory activity of serine palmitoyltransferases (LCB1 and LCB2).

The protein localises to the endoplasmic reticulum membrane. In terms of biological role, component of the SPOTS complex that acts as a negative regulator of sphingolipid synthesis. Acts by inhibiting serine palmitoyltransferases (LCB1 and LCB2) activity. Along with ORM1, plays a role in the phosphorylation of LAC1 and YPK1, the distribution of actin patches between mother and daughter cells, and in endocytosis. This Saccharomyces cerevisiae (strain ATCC 204508 / S288c) (Baker's yeast) protein is Protein ORM2 (ORM2).